The primary structure comprises 513 residues: GMP synthase [glutamine-hydrolyzing] (513 aa).

The Glutamine amidotransferase type-1 domain occupies 8 to 198; the sequence is MILVLDFGSQ…VFGVCECEGE (191 aa). The active-site Nucleophile is Cys-85. Catalysis depends on residues His-172 and Glu-174. The 190-residue stretch at 199-388 folds into the GMPS ATP-PPase domain; sequence WSMENFIEIE…LGIPDEIVWR (190 aa). ATP is bound at residue 227 to 233; that stretch reads GGVDSSV.

As to quaternary structure, homodimer.

The enzyme catalyses XMP + L-glutamine + ATP + H2O = GMP + L-glutamate + AMP + diphosphate + 2 H(+). It participates in purine metabolism; GMP biosynthesis; GMP from XMP (L-Gln route): step 1/1. In terms of biological role, catalyzes the synthesis of GMP from XMP. This Bacillus subtilis (strain 168) protein is GMP synthase [glutamine-hydrolyzing] (guaA).